An 821-amino-acid chain; its full sequence is TORTIFOLIA1-like protein 1 (821 aa).

5 HEAT repeats span residues 69-110 (PDSP…SYTD), 114-151 (SQLA…QFLK), 163-201 (SSLV…SATE), 205-242 (AAFQ…VGAI), and 245-282 (QSLE…HSSS). Ser-406 is subject to Phosphoserine. 2 disordered regions span residues 416 to 437 (PSRQ…NTSV) and 553 to 610 (MSIQ…RAWD). Residues 501-554 (PPLQRQLLHLERQQTHIMNMLQDFMGGSHDGMISLENRVRGLERIVEEMSREMS) adopt a coiled-coil conformation. Residues 579-590 (YGPSSRNTQTST) are compositionally biased toward polar residues.

In terms of tissue distribution, expressed at low levels in roots, hypocotyls, stems, flowers, siliques, cotyledons, and leaves. Particularly present in hydathodes of cotyledons and root hairs.

Its subcellular location is the cytoplasm. The protein localises to the cytoskeleton. Plant-specific microtubule-associated protein (MAP) that regulates the orientation of cortical microtubules and the direction of organ growth. The polypeptide is TORTIFOLIA1-like protein 1 (Arabidopsis thaliana (Mouse-ear cress)).